The chain runs to 669 residues: Methionine--tRNA ligase (669 aa).

The 'HIGH' region signature appears at 15-25 (PYANGPAHIGH). Residues Cys-146, Cys-149, Cys-158, and Cys-162 each coordinate Zn(2+). A 'KMSKS' region motif is present at residues 328–332 (KFSKS). Lys-331 is a binding site for ATP. The tRNA-binding domain occupies 570–669 (QFKALDLRVG…KEVPAGCGIR (100 aa)).

It belongs to the class-I aminoacyl-tRNA synthetase family. MetG type 1 subfamily. As to quaternary structure, homodimer. The cofactor is Zn(2+).

The protein resides in the cytoplasm. The catalysed reaction is tRNA(Met) + L-methionine + ATP = L-methionyl-tRNA(Met) + AMP + diphosphate. Functionally, is required not only for elongation of protein synthesis but also for the initiation of all mRNA translation through initiator tRNA(fMet) aminoacylation. In Methanothrix thermoacetophila (strain DSM 6194 / JCM 14653 / NBRC 101360 / PT) (Methanosaeta thermophila), this protein is Methionine--tRNA ligase.